The chain runs to 905 residues: Protein LONGIFOLIA 2 (905 aa).

Disordered stretches follow at residues 42–136, 232–268, 285–315, 432–585, 606–626, and 690–711; these read VSGG…GGLM, RLSL…RSSS, DTEQ…SRSV, STSP…SDSN, CDFP…IKQD, and VPFP…ECSP. The span at 65-74 shows a compositional bias: basic and acidic residues; the sequence is ESDKETERSS. A compositionally biased stretch (low complexity) spans 90-117; it reads FESSSRPSFSSSPRSSSFSSAEVSTTAS. The segment covering 286–296 has biased composition (basic and acidic residues); the sequence is TEQRRENRFCD. Polar residues-rich tracts occupy residues 432-461, 477-487, and 501-516; these read STSP…SGKQ, LDSTKSNSPKT, and MTKS…SPRT. The span at 566–581 shows a compositional bias: basic and acidic residues; that stretch reads PDDRLSDARSDLRSLR.

Interacts (via C-terminus) with TON1A and TON1B.

It is found in the cytoplasm. It localises to the cytoskeleton. Functionally, in association with LNG1, regulates leaf morphology by promoting longitudinal polar cell elongation independently of ROT3. Associates with microtubules and recruits TON1A and TON1B to the cytoskeleton through its C-terminus. In Arabidopsis thaliana (Mouse-ear cress), this protein is Protein LONGIFOLIA 2 (LNG2).